The chain runs to 435 residues: MESESESGAAADTPPLETLSFHGDEEIIEVVELDPGPPDPDDLAQEMEDVDFEEEEEEEEGNEEGWVLEPQEGVVGSMEGPDDSEVTFALHSASVFCVSLDPKTNTLAVTGGEDDKAFVWRLSDGELLFECAGHKDSVTCAGFSHDSTLVATGDMSGLLKVWQVDTKEEVWSFEAGDLEWMEWHPRAPVLLAGTADGNTWMWKVPNGDCKTFQGPNCPATCGRVLPDGKRAVVGYEDGTIRIWDLKQGSPIHVLKGTEGHQGPLTCVATNQDGSLILTGSVDCQAQLVSATTGKVVGVFRPETVASQPNVGEGEESESNSVESLGFCSVMPLAAVGYLDGTLAIYDLSTQTLRHQCQHQSGIVQLLWEAGTAVVYTCSLDGIVRLWDARTGRLLTDYRGHTAEILDFALSKDASLVVTTSGDHKAKVFCVQRPDR.

A disordered region spans residues Met1–Gly65. The residue at position 20 (Ser20) is a Phosphoserine. Over residues Asp39 to Glu63 the composition is skewed to acidic residues. 8 WD repeats span residues Leu90–Glu130, Gly133–Ser172, Glu174–Gln213, Pro215–Lys255, Gly259–Arg300, Ser316–Gln355, Gln357–Asp396, and Gly399–Asp434.

The protein resides in the cell membrane. It localises to the cytoplasm. In terms of biological role, plays a role in angiogenesis and cell migration. In smooth muscle cell migration, may act through the RhoA pathway. This is Angio-associated migratory cell protein (AAMP) from Canis lupus familiaris (Dog).